A 176-amino-acid chain; its full sequence is Endoribonuclease YbeY (176 aa).

Zn(2+)-binding residues include histidine 138, histidine 142, and histidine 148.

Belongs to the endoribonuclease YbeY family. It depends on Zn(2+) as a cofactor.

Its subcellular location is the cytoplasm. In terms of biological role, single strand-specific metallo-endoribonuclease involved in late-stage 70S ribosome quality control and in maturation of the 3' terminus of the 16S rRNA. The chain is Endoribonuclease YbeY from Trichormus variabilis (strain ATCC 29413 / PCC 7937) (Anabaena variabilis).